We begin with the raw amino-acid sequence, 261 residues long: Putative phosphite transport system permease protein HtxE (261 aa).

One can recognise an ABC transmembrane type-1 domain in the interval 47–253; the sequence is EATTETVEVL…VFVFVLDQLQ (207 aa). Helical transmembrane passes span 122–142, 203–220, and 229–249; these read LIVALFLVLAYGFGPIAGVLA, RNLRMATVIGLVGAGGIG, and MFQYGHVMTILIAIFVFVFVL.

This sequence belongs to the binding-protein-dependent transport system permease family.

It is found in the cell inner membrane. Functionally, probably forms part of a binding-protein-dependent hypophosphite transporter. The sequence is that of Putative phosphite transport system permease protein HtxE (htxE) from Stutzerimonas stutzeri (Pseudomonas stutzeri).